Here is a 122-residue protein sequence, read N- to C-terminus: Acidic phospholipase A2 CbIalpha (122 aa).

7 disulfides stabilise this stretch: Cys26/Cys115, Cys28/Cys44, Cys43/Cys95, Cys49/Cys122, Cys50/Cys88, Cys57/Cys81, and Cys75/Cys86. Positions 27, 29, and 31 each coordinate Ca(2+). The active site involves His47. Asp48 is a Ca(2+) binding site. Asp89 is an active-site residue.

This sequence belongs to the phospholipase A2 family. Group II subfamily. D49 sub-subfamily. In terms of assembly, heterodimer of an acidic subunit (CbIalpha or CbIbeta) and a basic subunit (CbII). The acidic subunit is non-toxic, and increases the toxicity of the basic subunit. Requires Ca(2+) as cofactor. In terms of tissue distribution, expressed by the venom gland.

The protein localises to the secreted. The catalysed reaction is a 1,2-diacyl-sn-glycero-3-phosphocholine + H2O = a 1-acyl-sn-glycero-3-phosphocholine + a fatty acid + H(+). Its function is as follows. Heterodimer: presynaptic neurotoxin. In terms of biological role, monomer: Snake venom phospholipase A2 (PLA2) is inactive towards micellar phosphatidylcholine but is weakly active towards non-micellar dithiolecithin. PLA2 catalyzes the calcium-dependent hydrolysis of the 2-acyl groups in 3-sn-phosphoglycerides. The protein is Acidic phospholipase A2 CbIalpha of Pseudocerastes fieldi (Field's horned viper).